A 199-amino-acid chain; its full sequence is MSSGNAKIGHPAPNFKATAVMPDGQFKDISLSDYKGKYVVFFFYPLDFTFVCPTEIIAFSDRAEEFKKLNCQVIGASVDSHFCHLAWVNTPKKQGGLGPMNIPLVSDPKRTIAQDYGVLKADEGISFRGLFIIDDKGILRQITVNDLPVGRSVDETLRLVQAFQFTDKHGEVCPAGWKPGSDTIKPDVQKSKEYFSKQK.

Ser-2 carries the N-acetylserine modification. The Thioredoxin domain maps to Ala-6–Phe-165. An N6-acetyllysine; alternate modification is found at Lys-7. Lys-7 participates in a covalent cross-link: Glycyl lysine isopeptide (Lys-Gly) (interchain with G-Cter in SUMO2); alternate. N6-acetyllysine occurs at positions 16 and 27. Phosphoserine is present on Ser-32. Lys-35 is modified (N6-acetyllysine; alternate). Residue Lys-35 is modified to N6-succinyllysine; alternate. Residue Cys-52 is the Cysteine sulfenic acid (-SOH) intermediate of the active site. Thr-90 carries the post-translational modification Phosphothreonine; by CDK1. Lys-120 is covalently cross-linked (Glycyl lysine isopeptide (Lys-Gly) (interchain with G-Cter in SUMO2)). N6-acetyllysine is present on Lys-136. The interval Gly-176–Lys-199 is disordered. The segment covering Ile-184–Lys-199 has biased composition (basic and acidic residues). Lys-185 is covalently cross-linked (Glycyl lysine isopeptide (Lys-Gly) (interchain with G-Cter in SUMO1)). N6-acetyllysine is present on Lys-197.

Belongs to the peroxiredoxin family. AhpC/Prx1 subfamily. As to quaternary structure, homodimer; disulfide-linked, upon oxidation. 5 homodimers assemble to form a ring-like decamer. Interacts with GDPD5; forms a mixed-disulfide with GDPD5. Interacts with SESN1 and SESN2. Interacts with FAM107A. Post-translationally, phosphorylated on Thr-90 during the M-phase, which leads to a more than 80% decrease in enzymatic activity. Acetylation increases reducing activity and resistance to superoxidation. Deacetylated by HDAC6 which decreases reducing activity. In terms of processing, the enzyme can be inactivated by further oxidation of the cysteine sulfenic acid (C(P)-SOH) to sulphinic acid (C(P)-SO2H) instead of its condensation to a disulfide bond. It can be reactivated by forming a transient disulfide bond with sulfiredoxin SRXN1, which reduces the cysteine sulfinic acid in an ATP- and Mg-dependent manner.

The protein resides in the cytoplasm. The protein localises to the melanosome. It carries out the reaction a hydroperoxide + [thioredoxin]-dithiol = an alcohol + [thioredoxin]-disulfide + H2O. Functionally, thiol-specific peroxidase that catalyzes the reduction of hydrogen peroxide and organic hydroperoxides to water and alcohols, respectively. Plays a role in cell protection against oxidative stress by detoxifying peroxides and as sensor of hydrogen peroxide-mediated signaling events. Might participate in the signaling cascades of growth factors and tumor necrosis factor-alpha by regulating the intracellular concentrations of H(2)O(2). Reduces an intramolecular disulfide bond in GDPD5 that gates the ability to GDPD5 to drive postmitotic motor neuron differentiation. This is Peroxiredoxin-1 (PRDX1) from Homo sapiens (Human).